Here is a 267-residue protein sequence, read N- to C-terminus: tRNA pseudouridine synthase A (267 aa).

Residue D55 is the Nucleophile of the active site. Y111 serves as a coordination point for substrate.

This sequence belongs to the tRNA pseudouridine synthase TruA family.

The catalysed reaction is uridine(38/39/40) in tRNA = pseudouridine(38/39/40) in tRNA. Its function is as follows. Formation of pseudouridine at positions 38, 39 and 40 in the anticodon stem and loop of transfer RNAs. The sequence is that of tRNA pseudouridine synthase A from Thermococcus kodakarensis (strain ATCC BAA-918 / JCM 12380 / KOD1) (Pyrococcus kodakaraensis (strain KOD1)).